The primary structure comprises 372 residues: UDP-N-acetylglucosamine--N-acetylmuramyl-(pentapeptide) pyrophosphoryl-undecaprenol N-acetylglucosamine transferase (372 aa).

Residues 21-23, Asn-135, Arg-172, Ser-206, and Gln-303 each bind UDP-N-acetyl-alpha-D-glucosamine; that span reads TAG.

The protein belongs to the glycosyltransferase 28 family. MurG subfamily.

The protein localises to the cell membrane. It catalyses the reaction di-trans,octa-cis-undecaprenyl diphospho-N-acetyl-alpha-D-muramoyl-L-alanyl-D-glutamyl-meso-2,6-diaminopimeloyl-D-alanyl-D-alanine + UDP-N-acetyl-alpha-D-glucosamine = di-trans,octa-cis-undecaprenyl diphospho-[N-acetyl-alpha-D-glucosaminyl-(1-&gt;4)]-N-acetyl-alpha-D-muramoyl-L-alanyl-D-glutamyl-meso-2,6-diaminopimeloyl-D-alanyl-D-alanine + UDP + H(+). Its pathway is cell wall biogenesis; peptidoglycan biosynthesis. Its function is as follows. Cell wall formation. Catalyzes the transfer of a GlcNAc subunit on undecaprenyl-pyrophosphoryl-MurNAc-pentapeptide (lipid intermediate I) to form undecaprenyl-pyrophosphoryl-MurNAc-(pentapeptide)GlcNAc (lipid intermediate II). In Paenarthrobacter aurescens (strain TC1), this protein is UDP-N-acetylglucosamine--N-acetylmuramyl-(pentapeptide) pyrophosphoryl-undecaprenol N-acetylglucosamine transferase.